An 86-amino-acid polypeptide reads, in one-letter code: Putative membrane protein insertion efficiency factor (86 aa).

Positions 66-86 are disordered; that stretch reads FSKGGFDPVPPHDGVPGKKED.

Belongs to the UPF0161 family.

It localises to the cell inner membrane. Its function is as follows. Could be involved in insertion of integral membrane proteins into the membrane. This is Putative membrane protein insertion efficiency factor from Chlorobium luteolum (strain DSM 273 / BCRC 81028 / 2530) (Pelodictyon luteolum).